The following is a 541-amino-acid chain: Membrane protein insertase YidC (541 aa).

A helical membrane pass occupies residues 6–26 (SLLVLALIFISFLVYQQWQLD). The interval 34-56 (EQTTSITATSDVPASSPSNSQAI) is disordered. A run of 4 helical transmembrane segments spans residues 337-357 (FWLL…IICV), 416-436 (LGGC…YWTF), 454-474 (LSAQ…MFLL), and 495-515 (PLVF…YWLV).

Belongs to the OXA1/ALB3/YidC family. Type 1 subfamily. In terms of assembly, interacts with the Sec translocase complex via SecD. Specifically interacts with transmembrane segments of nascent integral membrane proteins during membrane integration.

The protein localises to the cell inner membrane. In terms of biological role, required for the insertion and/or proper folding and/or complex formation of integral membrane proteins into the membrane. Involved in integration of membrane proteins that insert both dependently and independently of the Sec translocase complex, as well as at least some lipoproteins. Aids folding of multispanning membrane proteins. The polypeptide is Membrane protein insertase YidC (Haemophilus influenzae (strain 86-028NP)).